The sequence spans 146 residues: Large ribosomal subunit protein uL13 (146 aa).

Positions 126-146 are disordered; that stretch reads AGPKHPHAAQQPKVYEPRPRG.

This sequence belongs to the universal ribosomal protein uL13 family. In terms of assembly, part of the 50S ribosomal subunit.

In terms of biological role, this protein is one of the early assembly proteins of the 50S ribosomal subunit, although it is not seen to bind rRNA by itself. It is important during the early stages of 50S assembly. The protein is Large ribosomal subunit protein uL13 of Roseiflexus castenholzii (strain DSM 13941 / HLO8).